Here is a 274-residue protein sequence, read N- to C-terminus: NH(3)-dependent NAD(+) synthetase (274 aa).

Residue 46–53 (GISGGQDS) coordinates ATP. D52 contacts Mg(2+). A deamido-NAD(+)-binding site is contributed by R140. T160 is an ATP binding site. E165 serves as a coordination point for Mg(2+). Deamido-NAD(+) contacts are provided by K173 and D180. Residues K189 and T211 each coordinate ATP. 260 to 261 (HK) is a binding site for deamido-NAD(+).

Belongs to the NAD synthetase family. As to quaternary structure, homodimer.

It carries out the reaction deamido-NAD(+) + NH4(+) + ATP = AMP + diphosphate + NAD(+) + H(+). It participates in cofactor biosynthesis; NAD(+) biosynthesis; NAD(+) from deamido-NAD(+) (ammonia route): step 1/1. Its function is as follows. Catalyzes the ATP-dependent amidation of deamido-NAD to form NAD. Uses ammonia as a nitrogen source. This chain is NH(3)-dependent NAD(+) synthetase, found in Nocardia farcinica (strain IFM 10152).